The chain runs to 333 residues: DNA-directed RNA polymerase subunit alpha (333 aa).

An alpha N-terminal domain (alpha-NTD) region spans residues 1-233; sequence MVREKVKVST…NLFIPFLHVE (233 aa). Residues 267–333 are alpha C-terminal domain (alpha-CTD); that stretch reads LVFQYIFIDQ…LEKNRKFISN (67 aa).

It belongs to the RNA polymerase alpha chain family. In terms of assembly, in plastids the minimal PEP RNA polymerase catalytic core is composed of four subunits: alpha, beta, beta', and beta''. When a (nuclear-encoded) sigma factor is associated with the core the holoenzyme is formed, which can initiate transcription.

It localises to the plastid. It is found in the chloroplast. It catalyses the reaction RNA(n) + a ribonucleoside 5'-triphosphate = RNA(n+1) + diphosphate. In terms of biological role, DNA-dependent RNA polymerase catalyzes the transcription of DNA into RNA using the four ribonucleoside triphosphates as substrates. In Aethionema grandiflorum (Persian stone-cress), this protein is DNA-directed RNA polymerase subunit alpha.